The following is a 382-amino-acid chain: 2-epi-valiolone synthase (382 aa).

NAD(+) contacts are provided by residues 92-95 (EKSK), 124-128 (GVVVD), 148-149 (TT), Lys161, Lys170, and 188-191 (HLRT). Glu203, His266, and His283 together coordinate Zn(2+).

Belongs to the sugar phosphate cyclases superfamily. EVS family. The cofactor is NAD(+). Co(2+) serves as cofactor. Requires Zn(2+) as cofactor.

The catalysed reaction is D-sedoheptulose 7-phosphate = 2-epi-valiolone + phosphate. Functionally, catalyzes the conversion of sedoheptulose 7-phosphate to 2-epi-valiolone, which may serve as an alternative precursor for aminocyclitol biosynthesis. This is 2-epi-valiolone synthase from Actinosynnema mirum (strain ATCC 29888 / DSM 43827 / JCM 3225 / NBRC 14064 / NCIMB 13271 / NRRL B-12336 / IMRU 3971 / 101).